The following is a 173-amino-acid chain: MGARVTRALRNFNVEKRAEREISKRKPSMAPKHPSTRDLLQEHRSQYPEIEEVVSKKDNKLLSLLRDVYVDSKDPVPALPVKVEPRQEPKEFRLPIGNHFDKNITDIPKGKITVVEALTLLNNHKLSPETWTAEKIAQEYYLELKDVNSLLKYFVTFEVKILPPEDRKAIQSK.

Gly-2 carries the N-myristoyl glycine lipid modification. The tract at residues 16–40 is disordered; sequence KRAEREISKRKPSMAPKHPSTRDLL. Ser-35 carries the post-translational modification Phosphoserine.

Belongs to the NDUFAF4 family. As to quaternary structure, binds calmodulin. Interacts with NDUFAF3. Post-translationally, phosphorylated on serine. Prolactin stimulate serine phosphorylation.

Its subcellular location is the mitochondrion. The protein localises to the membrane. Functionally, may be involved in cell proliferation and survival of hormone-dependent tumor cells. Involved in the assembly of mitochondrial NADH:ubiquinone oxidoreductase complex (complex I). This is NADH dehydrogenase [ubiquinone] 1 alpha subcomplex assembly factor 4 (Ndufaf4) from Mus musculus (Mouse).